An 876-amino-acid polypeptide reads, in one-letter code: Extended synaptotagmin-2-B (876 aa).

Positions methionine 1–proline 21 are disordered. Residues methionine 1 to glycine 35 are Cytoplasmic-facing. A helical membrane pass occupies residues methionine 36 to phenylalanine 56. The Lumenal segment spans residues proline 57–tyrosine 59. Residues valine 60–tryptophan 80 traverse the membrane as a helical segment. Topologically, residues tryptophan 81–serine 876 are cytoplasmic. The 180-residue stretch at aspartate 123 to valine 302 folds into the SMP-LTD domain. C2 domains are found at residues leucine 301 to phenylalanine 421 and asparagine 446 to asparagine 592. Ca(2+) contacts are provided by lysine 332, aspartate 333, aspartate 345, aspartate 392, glutamate 393, aspartate 394, aspartate 396, aspartate 398, and aspartate 399. The segment at valine 614–aspartate 714 is disordered. Residues proline 636–proline 656 show a composition bias toward pro residues. A compositionally biased stretch (low complexity) spans serine 686–serine 698. Residues proline 741–phenylalanine 863 enclose the C2 3 domain. The interval lysine 788–lysine 795 is required for phosphatidylinositol 4,5-bisphosphate-dependent location at the cell membrane.

Belongs to the extended synaptotagmin family. Interacts with fgfr1 that has been activated by fgf1 binding. Interacts (via C2 domains) with the AP-2 complex (via an alpha subunit). Identified in a complex with the AP-2 complex and fgfr1.

Its subcellular location is the cell membrane. The protein resides in the endoplasmic reticulum membrane. Its function is as follows. Tethers the endoplasmic reticulum to the cell membrane and promotes the formation of appositions between the endoplasmic reticulum and the cell membrane. Binds glycerophospholipids in a barrel-like domain and may play a role in cellular lipid transport. Plays a role in the rapid internalization of fgfr1 that has been activated by fgf1 binding; this occurs most likely via the AP-2 complex. Required for normal fgf signaling and the activation of downstream signaling cascades via its role in the internalization of activated fgfr1. Required for normal embryonic development via its role in fgf signaling and the downstream regulation of t/xBRA expression. This is Extended synaptotagmin-2-B (esyt2-b) from Xenopus laevis (African clawed frog).